The chain runs to 636 residues: 1-deoxy-D-xylulose-5-phosphate synthase (636 aa).

Residues His77 and 118–120 (GHS) contribute to the thiamine diphosphate site. Asp149 serves as a coordination point for Mg(2+). Thiamine diphosphate-binding positions include 150-151 (GA), Asn178, Tyr290, and Glu375. Asn178 is a binding site for Mg(2+).

Belongs to the transketolase family. DXPS subfamily. In terms of assembly, homodimer. The cofactor is Mg(2+). Requires thiamine diphosphate as cofactor.

It catalyses the reaction D-glyceraldehyde 3-phosphate + pyruvate + H(+) = 1-deoxy-D-xylulose 5-phosphate + CO2. Its pathway is metabolic intermediate biosynthesis; 1-deoxy-D-xylulose 5-phosphate biosynthesis; 1-deoxy-D-xylulose 5-phosphate from D-glyceraldehyde 3-phosphate and pyruvate: step 1/1. In terms of biological role, catalyzes the acyloin condensation reaction between C atoms 2 and 3 of pyruvate and glyceraldehyde 3-phosphate to yield 1-deoxy-D-xylulose-5-phosphate (DXP). The polypeptide is 1-deoxy-D-xylulose-5-phosphate synthase (Cytophaga hutchinsonii (strain ATCC 33406 / DSM 1761 / CIP 103989 / NBRC 15051 / NCIMB 9469 / D465)).